The primary structure comprises 229 residues: Potassium/proton antiporter CemA (229 aa).

3 consecutive transmembrane segments (helical) span residues 6-26 (AFIP…ISLC), 107-127 (ILHF…SFWG), and 189-209 (ILSG…KYWI).

This sequence belongs to the CemA family.

It localises to the plastid. The protein localises to the chloroplast inner membrane. It catalyses the reaction K(+)(in) + H(+)(out) = K(+)(out) + H(+)(in). Contributes to K(+)/H(+) antiport activity by supporting proton efflux to control proton extrusion and homeostasis in chloroplasts in a light-dependent manner to modulate photosynthesis. Prevents excessive induction of non-photochemical quenching (NPQ) under continuous-light conditions. Indirectly promotes efficient inorganic carbon uptake into chloroplasts. The protein is Potassium/proton antiporter CemA of Arabis hirsuta (Hairy rock-cress).